The following is a 204-amino-acid chain: Holliday junction branch migration complex subunit RuvA (204 aa).

The domain I stretch occupies residues 1–64 (MIGRLQGILL…EDAHLLFGFA (64 aa)). Positions 65 to 143 (QKTDRTLFRE…GIKQSDFFVE (79 aa)) are domain II. A flexible linker region spans residues 144 to 155 (STHIPLSPSIES). The tract at residues 156–204 (HSESSSDEAISALIALGYKPAEAEKMVKRVAKPELTSEQVIREALKAAL) is domain III.

The protein belongs to the RuvA family. As to quaternary structure, homotetramer. Forms an RuvA(8)-RuvB(12)-Holliday junction (HJ) complex. HJ DNA is sandwiched between 2 RuvA tetramers; dsDNA enters through RuvA and exits via RuvB. An RuvB hexamer assembles on each DNA strand where it exits the tetramer. Each RuvB hexamer is contacted by two RuvA subunits (via domain III) on 2 adjacent RuvB subunits; this complex drives branch migration. In the full resolvosome a probable DNA-RuvA(4)-RuvB(12)-RuvC(2) complex forms which resolves the HJ.

Its subcellular location is the cytoplasm. Functionally, the RuvA-RuvB-RuvC complex processes Holliday junction (HJ) DNA during genetic recombination and DNA repair, while the RuvA-RuvB complex plays an important role in the rescue of blocked DNA replication forks via replication fork reversal (RFR). RuvA specifically binds to HJ cruciform DNA, conferring on it an open structure. The RuvB hexamer acts as an ATP-dependent pump, pulling dsDNA into and through the RuvAB complex. HJ branch migration allows RuvC to scan DNA until it finds its consensus sequence, where it cleaves and resolves the cruciform DNA. This Haemophilus influenzae (strain 86-028NP) protein is Holliday junction branch migration complex subunit RuvA.